We begin with the raw amino-acid sequence, 1232 residues long: DNA-directed RNA polymerase subunit beta (1232 aa).

Residues 1170-1232 are disordered; it reads SVDEDADELE…LDLDDFGDEH (63 aa). Acidic residues predominate over residues 1171–1180; it reads VDEDADELEV. The span at 1189 to 1198 shows a compositional bias: basic and acidic residues; sequence PEEKEEKEKE. Residues 1199–1232 are compositionally biased toward acidic residues; the sequence is DSDEYDDLREEDVEPDLEELSLDDLDLDDFGDEH.

This sequence belongs to the RNA polymerase beta chain family. In terms of assembly, the RNAP catalytic core consists of 2 alpha, 1 beta, 1 beta' and 1 omega subunit. When a sigma factor is associated with the core the holoenzyme is formed, which can initiate transcription.

The enzyme catalyses RNA(n) + a ribonucleoside 5'-triphosphate = RNA(n+1) + diphosphate. Functionally, DNA-dependent RNA polymerase catalyzes the transcription of DNA into RNA using the four ribonucleoside triphosphates as substrates. The polypeptide is DNA-directed RNA polymerase subunit beta (Clostridium botulinum (strain Hall / ATCC 3502 / NCTC 13319 / Type A)).